We begin with the raw amino-acid sequence, 155 residues long: Small ribosomal subunit protein uS7cz/uS7cy (155 aa).

Belongs to the universal ribosomal protein uS7 family. Part of the 30S ribosomal subunit.

Its subcellular location is the plastid. The protein localises to the chloroplast. One of the primary rRNA binding proteins, it binds directly to 16S rRNA where it nucleates assembly of the head domain of the 30S subunit. The protein is Small ribosomal subunit protein uS7cz/uS7cy (rps7-A) of Ceratophyllum demersum (Rigid hornwort).